The sequence spans 356 residues: Protein RecA (356 aa).

77–84 (GPESSGKT) provides a ligand contact to ATP.

The protein belongs to the RecA family.

The protein resides in the cytoplasm. Can catalyze the hydrolysis of ATP in the presence of single-stranded DNA, the ATP-dependent uptake of single-stranded DNA by duplex DNA, and the ATP-dependent hybridization of homologous single-stranded DNAs. It interacts with LexA causing its activation and leading to its autocatalytic cleavage. This Caulobacter vibrioides (strain ATCC 19089 / CIP 103742 / CB 15) (Caulobacter crescentus) protein is Protein RecA.